The sequence spans 513 residues: 2-isopropylmalate synthase (513 aa).

The region spanning 5-268 (LIIFDTTLRD…DVGIDTTQIV (264 aa)) is the Pyruvate carboxyltransferase domain. Residues Asp14, His202, His204, and Asn239 each contribute to the Mn(2+) site. A regulatory domain region spans residues 394–513 (RFISLSQRSE…KAVQKINPQI (120 aa)).

The protein belongs to the alpha-IPM synthase/homocitrate synthase family. LeuA type 1 subfamily. Homodimer. Requires Mn(2+) as cofactor.

The protein localises to the cytoplasm. It carries out the reaction 3-methyl-2-oxobutanoate + acetyl-CoA + H2O = (2S)-2-isopropylmalate + CoA + H(+). Its pathway is amino-acid biosynthesis; L-leucine biosynthesis; L-leucine from 3-methyl-2-oxobutanoate: step 1/4. In terms of biological role, catalyzes the condensation of the acetyl group of acetyl-CoA with 3-methyl-2-oxobutanoate (2-ketoisovalerate) to form 3-carboxy-3-hydroxy-4-methylpentanoate (2-isopropylmalate). The polypeptide is 2-isopropylmalate synthase (Cupriavidus metallidurans (strain ATCC 43123 / DSM 2839 / NBRC 102507 / CH34) (Ralstonia metallidurans)).